A 415-amino-acid chain; its full sequence is Alditol oxidase (415 aa).

Residues 12 to 179 enclose the FAD-binding PCMH-type domain; the sequence is ITYTAKEVHR…TALTLDLEPA (168 aa). Position 46 is a pros-8alpha-FAD histidine (His-46). Residues Ser-106, Ser-111, Gly-114, 118 to 121, and Val-169 each bind FAD; that span reads TGTH. Ser-106 contacts xylitol. Xylitol contacts are provided by Glu-317, Arg-319, and Thr-342. Arg-319 contacts FAD. Position 369 (His-369) interacts with FAD. Lys-372 is a xylitol binding site.

It belongs to the oxygen-dependent FAD-linked oxidoreductase family. In terms of assembly, monomer. The cofactor is FAD.

It catalyses the reaction an alditol + O2 = an aldose + H2O2. The enzyme catalyses xylitol + O2 = D-xylose + H2O2. The catalysed reaction is D-sorbitol + O2 = D-glucose + H2O2. In terms of biological role, oxidase that performs selective oxidation of the terminal primary hydroxyl group of several alditols, with a reduction of O2 to H2O2. Shows highest activity on xylitol and D-sorbitol, and to a lesser extent, can also use galactitol, D-mannitol, and D-arabitol as substrates in vitro. Is not active on D-glucose, D-xylose, D-galactose, D-mannose, D-fructose, L-sorbose, L-fucose, myoinositol, glycerol, ethyl alcohol, and meso-erythritol. The polypeptide is Alditol oxidase (Streptomyces sp. (strain IKD472 / FERM P-14339)).